The sequence spans 50 residues: Large ribosomal subunit protein eL39 (50 aa).

The span at 1–12 (MGKKSKAKKKRL) shows a compositional bias: basic residues. The disordered stretch occupies residues 1–21 (MGKKSKAKKKRLGKLEKQNSR).

This sequence belongs to the eukaryotic ribosomal protein eL39 family.

The sequence is that of Large ribosomal subunit protein eL39 from Haloquadratum walsbyi (strain DSM 16790 / HBSQ001).